Reading from the N-terminus, the 502-residue chain is ATP synthase subunit alpha (502 aa).

ATP is bound at residue glycine 169–threonine 176.

The protein belongs to the ATPase alpha/beta chains family. F-type ATPases have 2 components, CF(1) - the catalytic core - and CF(0) - the membrane proton channel. CF(1) has five subunits: alpha(3), beta(3), gamma(1), delta(1), epsilon(1). CF(0) has three main subunits: a(1), b(2) and c(9-12). The alpha and beta chains form an alternating ring which encloses part of the gamma chain. CF(1) is attached to CF(0) by a central stalk formed by the gamma and epsilon chains, while a peripheral stalk is formed by the delta and b chains.

It is found in the cell membrane. The enzyme catalyses ATP + H2O + 4 H(+)(in) = ADP + phosphate + 5 H(+)(out). Functionally, produces ATP from ADP in the presence of a proton gradient across the membrane. The alpha chain is a regulatory subunit. This Streptococcus pyogenes serotype M18 (strain MGAS8232) protein is ATP synthase subunit alpha.